A 357-amino-acid polypeptide reads, in one-letter code: UDP-N-acetylglucosamine--N-acetylmuramyl-(pentapeptide) pyrophosphoryl-undecaprenol N-acetylglucosamine transferase (357 aa).

UDP-N-acetyl-alpha-D-glucosamine contacts are provided by residues 15 to 17, Asn123, Arg164, Ser190, and Gln284; that span reads TGG.

Belongs to the glycosyltransferase 28 family. MurG subfamily.

It is found in the cell inner membrane. The enzyme catalyses di-trans,octa-cis-undecaprenyl diphospho-N-acetyl-alpha-D-muramoyl-L-alanyl-D-glutamyl-meso-2,6-diaminopimeloyl-D-alanyl-D-alanine + UDP-N-acetyl-alpha-D-glucosamine = di-trans,octa-cis-undecaprenyl diphospho-[N-acetyl-alpha-D-glucosaminyl-(1-&gt;4)]-N-acetyl-alpha-D-muramoyl-L-alanyl-D-glutamyl-meso-2,6-diaminopimeloyl-D-alanyl-D-alanine + UDP + H(+). It participates in cell wall biogenesis; peptidoglycan biosynthesis. Cell wall formation. Catalyzes the transfer of a GlcNAc subunit on undecaprenyl-pyrophosphoryl-MurNAc-pentapeptide (lipid intermediate I) to form undecaprenyl-pyrophosphoryl-MurNAc-(pentapeptide)GlcNAc (lipid intermediate II). The sequence is that of UDP-N-acetylglucosamine--N-acetylmuramyl-(pentapeptide) pyrophosphoryl-undecaprenol N-acetylglucosamine transferase from Synechococcus elongatus (strain ATCC 33912 / PCC 7942 / FACHB-805) (Anacystis nidulans R2).